Reading from the N-terminus, the 192-residue chain is ADP-ribosylation factor-like protein 14 (192 aa).

Gly2 carries the N-myristoyl glycine lipid modification. Residues 20–27 (GLDSAGKS), 64–68 (DVGGQ), and 124–127 (NKQD) contribute to the GTP site.

This sequence belongs to the small GTPase superfamily. Arf family. Interacts with ARL14EP.

It is found in the cytoplasmic vesicle. GTPase that recruits MYO1E to MHC class II-containing vesicles via the effector protein ARL14EP and hence controls the movement of these vesicles along the actin cytoskeleton in dendritic cells. The polypeptide is ADP-ribosylation factor-like protein 14 (Arl14) (Mus musculus (Mouse)).